The primary structure comprises 471 residues: Light-independent protochlorophyllide reductase subunit N (471 aa).

C22, C47, and C107 together coordinate [4Fe-4S] cluster.

It belongs to the BchN/ChlN family. Protochlorophyllide reductase is composed of three subunits; ChlL, ChlN and ChlB. Forms a heterotetramer of two ChlB and two ChlN subunits. [4Fe-4S] cluster is required as a cofactor.

It localises to the plastid. The protein localises to the chloroplast. It carries out the reaction chlorophyllide a + oxidized 2[4Fe-4S]-[ferredoxin] + 2 ADP + 2 phosphate = protochlorophyllide a + reduced 2[4Fe-4S]-[ferredoxin] + 2 ATP + 2 H2O. The protein operates within porphyrin-containing compound metabolism; chlorophyll biosynthesis (light-independent). In terms of biological role, component of the dark-operative protochlorophyllide reductase (DPOR) that uses Mg-ATP and reduced ferredoxin to reduce ring D of protochlorophyllide (Pchlide) to form chlorophyllide a (Chlide). This reaction is light-independent. The NB-protein (ChlN-ChlB) is the catalytic component of the complex. The protein is Light-independent protochlorophyllide reductase subunit N of Anthoceros angustus (Hornwort).